The primary structure comprises 249 residues: MKNNYTSLKSPLDEEDELKTDHEIDLEKGPLPEYDSEEEGALPPYSDHALVNNPLNTHRENHSYGTTDNSSPLLIILLISFTSIILFNAPAFCYLKYKDAFFKNYGAAEWTLFGFWCLVCTLALIFLTYFYETWSKACGKGIKHFLKNWRNMIFAFCKSSLFCLVLLKAENKLSSHLGDQRWGWKCSASAFTFMAVSSILIFIAETVEPGSCSTDLVKRTLAFYGYEIRQHVNEDATILLREMNPESEA.

The interval 1–40 is disordered; sequence MKNNYTSLKSPLDEEDELKTDHEIDLEKGPLPEYDSEEEG. A compositionally biased stretch (basic and acidic residues) spans 19 to 30; sequence KTDHEIDLEKGP. A run of 4 helical transmembrane segments spans residues 73-93, 110-130, 151-170, and 187-207; these read LLII…PAFC, WTLF…LTYF, NMIF…LKAE, and SASA…AETV.

It belongs to the WTF family. In terms of assembly, homomer. Interacts with other proteins that exhibit high sequence similarity.

Its subcellular location is the spore membrane. It localises to the vacuole membrane. Acts as a suppressor component of the dual wtf meiotic drive system, and can suppress but not confer meiotic drive by compatible poisons. Wtf meiotic drive systems promote unequal transmission of alleles from the parental zygote to progeny spores by encoding a poison and an antidote from the same locus; the poison is trans-acting and forms toxic aggregates in all spores within an ascus, wherease the antidote is spore-specific and targets aggregates for degradation by the vacuole. Meiotic drive by wtf systems therefore lead to poisoning of all progeny that do not inherit the dual poison/antidote allele, or express a compatible antidote. This Schizosaccharomyces pombe (strain 972 / ATCC 24843) (Fission yeast) protein is Meiotic drive suppressor wtf25.